Reading from the N-terminus, the 73-residue chain is Small ribosomal subunit protein bS18 (73 aa).

Belongs to the bacterial ribosomal protein bS18 family. In terms of assembly, part of the 30S ribosomal subunit. Forms a tight heterodimer with protein bS6.

Binds as a heterodimer with protein bS6 to the central domain of the 16S rRNA, where it helps stabilize the platform of the 30S subunit. The sequence is that of Small ribosomal subunit protein bS18 from Synechococcus sp. (strain WH7803).